The chain runs to 422 residues: 3-phosphoshikimate 1-carboxyvinyltransferase (422 aa).

Residues Lys-20, Ser-21, and Arg-25 each contribute to the 3-phosphoshikimate site. Lys-20 is a phosphoenolpyruvate binding site. Phosphoenolpyruvate contacts are provided by Gly-90 and Arg-118. Residues Ser-161, Ser-162, Gln-163, Ser-189, Asp-305, and Lys-332 each coordinate 3-phosphoshikimate. Gln-163 serves as a coordination point for phosphoenolpyruvate. Asp-305 acts as the Proton acceptor in catalysis. Phosphoenolpyruvate contacts are provided by Arg-336 and Arg-378.

This sequence belongs to the EPSP synthase family. Monomer.

It localises to the cytoplasm. The enzyme catalyses 3-phosphoshikimate + phosphoenolpyruvate = 5-O-(1-carboxyvinyl)-3-phosphoshikimate + phosphate. The protein operates within metabolic intermediate biosynthesis; chorismate biosynthesis. Functionally, catalyzes the transfer of the enolpyruvyl moiety of phosphoenolpyruvate (PEP) to the 5-hydroxyl of shikimate-3-phosphate (S3P) to produce enolpyruvyl shikimate-3-phosphate and inorganic phosphate. The chain is 3-phosphoshikimate 1-carboxyvinyltransferase from Nitrosopumilus maritimus (strain SCM1).